Reading from the N-terminus, the 170-residue chain is Ribosome maturation factor RimM (170 aa).

A PRC barrel domain is found at 97-170 (NADEYYWVDL…LVVVDWDPEF (74 aa)).

This sequence belongs to the RimM family. Binds ribosomal protein uS19.

The protein resides in the cytoplasm. In terms of biological role, an accessory protein needed during the final step in the assembly of 30S ribosomal subunit, possibly for assembly of the head region. Essential for efficient processing of 16S rRNA. May be needed both before and after RbfA during the maturation of 16S rRNA. It has affinity for free ribosomal 30S subunits but not for 70S ribosomes. The sequence is that of Ribosome maturation factor RimM from Stenotrophomonas maltophilia (strain R551-3).